The following is a 198-amino-acid chain: Acireductone dioxygenase (198 aa).

Fe(2+)-binding residues include His97, His99, Glu103, and His141. Ni(2+) is bound by residues His97, His99, Glu103, and His141.

The protein belongs to the acireductone dioxygenase (ARD) family. Monomer. Requires Fe(2+) as cofactor. Ni(2+) serves as cofactor.

It catalyses the reaction 1,2-dihydroxy-5-(methylsulfanyl)pent-1-en-3-one + O2 = 3-(methylsulfanyl)propanoate + CO + formate + 2 H(+). It carries out the reaction 1,2-dihydroxy-5-(methylsulfanyl)pent-1-en-3-one + O2 = 4-methylsulfanyl-2-oxobutanoate + formate + 2 H(+). It functions in the pathway amino-acid biosynthesis; L-methionine biosynthesis via salvage pathway; L-methionine from S-methyl-5-thio-alpha-D-ribose 1-phosphate: step 5/6. Its function is as follows. Catalyzes 2 different reactions between oxygen and the acireductone 1,2-dihydroxy-3-keto-5-methylthiopentene (DHK-MTPene) depending upon the metal bound in the active site. Fe-containing acireductone dioxygenase (Fe-ARD) produces formate and 2-keto-4-methylthiobutyrate (KMTB), the alpha-ketoacid precursor of methionine in the methionine recycle pathway. Ni-containing acireductone dioxygenase (Ni-ARD) produces methylthiopropionate, carbon monoxide and formate, and does not lie on the methionine recycle pathway. The polypeptide is Acireductone dioxygenase (Synechococcus elongatus (strain ATCC 33912 / PCC 7942 / FACHB-805) (Anacystis nidulans R2)).